Reading from the N-terminus, the 221-residue chain is Small ribosomal subunit protein uS2c (221 aa).

Belongs to the universal ribosomal protein uS2 family.

The protein localises to the plastid. It is found in the chloroplast. This chain is Small ribosomal subunit protein uS2c (rps2), found in Cyanidioschyzon merolae (strain NIES-3377 / 10D) (Unicellular red alga).